The sequence spans 205 residues: MSEIKLNYHKTHFLTSAPNIRSIPEDTGIEIAFAGRSNAGKSTALNALTNQKNLARTSKTPGRTQLINLFEVEPNYKLVDLPGYGYAAVPEQMKIQWQKSLGEYLQKRECLSGLVVLMDIRHPLKDLDQQMIEWAVSADLPILLLLTKADKLSQSARSKQVKMVREAILPFQGDIQVEAFSAQNKIGIDKLAAKLDFWFSPLFAK.

The EngB-type G domain occupies 27 to 201; it reads TGIEIAFAGR…AAKLDFWFSP (175 aa). GTP-binding positions include 35 to 42, 62 to 66, 80 to 83, 147 to 150, and 180 to 182; these read GRSNAGKS, GRTQL, DLPG, TKAD, and FSA. The Mg(2+) site is built by Ser42 and Thr64.

The protein belongs to the TRAFAC class TrmE-Era-EngA-EngB-Septin-like GTPase superfamily. EngB GTPase family. Mg(2+) is required as a cofactor.

In terms of biological role, necessary for normal cell division and for the maintenance of normal septation. The polypeptide is Probable GTP-binding protein EngB (Haemophilus influenzae (strain PittEE)).